The primary structure comprises 476 residues: UPF0481 protein At3g47200 (476 aa).

A disordered region spans residues 1-24; it reads MADKTDIISSSSDKASPPPPSAFR. The next 2 helical transmembrane spans lie at 133-153 and 439-459; these read LMFMMVLDGCFILMVFLIMSG and AVLFVILLTMLQSTVAILSYL.

This sequence belongs to the UPF0481 family.

It is found in the membrane. The chain is UPF0481 protein At3g47200 from Arabidopsis thaliana (Mouse-ear cress).